A 235-amino-acid polypeptide reads, in one-letter code: Carboxy-S-adenosyl-L-methionine synthase (235 aa).

S-adenosyl-L-methionine is bound by residues Tyr-35, 60–62, 84–85, 110–111, Asn-125, and Arg-192; these read GCS, DN, and DI.

This sequence belongs to the class I-like SAM-binding methyltransferase superfamily. Cx-SAM synthase family. In terms of assembly, homodimer.

The catalysed reaction is prephenate + S-adenosyl-L-methionine = carboxy-S-adenosyl-L-methionine + 3-phenylpyruvate + H2O. Functionally, catalyzes the conversion of S-adenosyl-L-methionine (SAM) to carboxy-S-adenosyl-L-methionine (Cx-SAM). The sequence is that of Carboxy-S-adenosyl-L-methionine synthase from Sulfurimonas denitrificans (strain ATCC 33889 / DSM 1251) (Thiomicrospira denitrificans (strain ATCC 33889 / DSM 1251)).